The following is a 591-amino-acid chain: Phenylalanine--tRNA ligase beta subunit (591 aa).

Residues 304–380 form the B5 domain; sequence LSYREMTVTT…VAFGYNNLIT (77 aa). 4 residues coordinate Mg(2+): aspartate 358, aspartate 364, glutamate 367, and aspartate 368.

It belongs to the phenylalanyl-tRNA synthetase beta subunit family. Type 2 subfamily. In terms of assembly, tetramer of two alpha and two beta subunits. It depends on Mg(2+) as a cofactor.

It localises to the cytoplasm. The enzyme catalyses tRNA(Phe) + L-phenylalanine + ATP = L-phenylalanyl-tRNA(Phe) + AMP + diphosphate + H(+). This chain is Phenylalanine--tRNA ligase beta subunit, found in Caenorhabditis elegans.